A 326-amino-acid chain; its full sequence is Peroxidase 39 (326 aa).

The N-terminal stretch at 1-23 is a signal peptide; sequence MTRFGLALLMILVIQGLVTFSEA. 4 cysteine pairs are disulfide-bonded: Cys-34–Cys-114, Cys-67–Cys-72, Cys-120–Cys-322, and Cys-199–Cys-232. His-65 (proton acceptor) is an active-site residue. The Ca(2+) site is built by Asp-66, Val-69, Gly-71, Asp-73, and Ser-75. Asn-79 carries an N-linked (GlcNAc...) asparagine glycan. Pro-162 provides a ligand contact to substrate. Asn-167 carries an N-linked (GlcNAc...) asparagine glycan. His-192 lines the heme b pocket. Thr-193 contributes to the Ca(2+) binding site. Asn-208 and Asn-238 each carry an N-linked (GlcNAc...) asparagine glycan. Asp-245, Ser-248, and Asp-253 together coordinate Ca(2+).

The protein belongs to the peroxidase family. Classical plant (class III) peroxidase subfamily. The cofactor is heme b. It depends on Ca(2+) as a cofactor. As to expression, slightly expressed in roots.

It is found in the secreted. It catalyses the reaction 2 a phenolic donor + H2O2 = 2 a phenolic radical donor + 2 H2O. In terms of biological role, removal of H(2)O(2), oxidation of toxic reductants, biosynthesis and degradation of lignin, suberization, auxin catabolism, response to environmental stresses such as wounding, pathogen attack and oxidative stress. These functions might be dependent on each isozyme/isoform in each plant tissue. This Arabidopsis thaliana (Mouse-ear cress) protein is Peroxidase 39 (PER39).